A 684-amino-acid chain; its full sequence is Probable pectin methyltransferase QUA2 (684 aa).

Residues 1 to 35 (MSMPLQRGISGVRVSDSSDDLRDSQMKDKTERARS) are disordered. The Cytoplasmic segment spans residues 1 to 86 (MSMPLQRGIS…RHRLMLLFLK (86 aa)). Over residues 19–35 (DDLRDSQMKDKTERARS) the composition is skewed to basic and acidic residues. Residues 87 to 107 (ISLVLIVVIALAGSFWWTISI) traverse the membrane as a helical; Signal-anchor for type II membrane protein segment. Topologically, residues 108-684 (STSSRGHVYH…QKPFTKRQSI (577 aa)) are lumenal. N161 and N476 each carry an N-linked (GlcNAc...) asparagine glycan.

The protein belongs to the methyltransferase superfamily. In terms of tissue distribution, ubiquitous.

It localises to the golgi apparatus membrane. Its pathway is glycan metabolism; pectin biosynthesis. In terms of biological role, may be involved in the synthesis of homogalacturonan. Required for normal cell adhesion and plant development. This Arabidopsis thaliana (Mouse-ear cress) protein is Probable pectin methyltransferase QUA2 (QUA2).